The primary structure comprises 88 residues: Phosphocarrier protein HPr (88 aa).

Residues 1-88 (MEQKSYVIID…DILSKEGLTK (88 aa)) form the HPr domain. The active-site Pros-phosphohistidine intermediate is the histidine 15. Serine 46 carries the post-translational modification Phosphoserine; by HPrK/P.

Belongs to the HPr family.

It is found in the cytoplasm. With respect to regulation, phosphorylation on Ser-46 inhibits the phosphoryl transfer from enzyme I to HPr. Functionally, general (non sugar-specific) component of the phosphoenolpyruvate-dependent sugar phosphotransferase system (sugar PTS). This major carbohydrate active-transport system catalyzes the phosphorylation of incoming sugar substrates concomitantly with their translocation across the cell membrane. The phosphoryl group from phosphoenolpyruvate (PEP) is transferred to the phosphoryl carrier protein HPr by enzyme I. Phospho-HPr then transfers it to the PTS EIIA domain. This chain is Phosphocarrier protein HPr (ptsH), found in Staphylococcus xylosus.